Here is a 262-residue protein sequence, read N- to C-terminus: Tryptophan synthase alpha chain (262 aa).

Catalysis depends on proton acceptor residues glutamate 49 and aspartate 60.

It belongs to the TrpA family. As to quaternary structure, tetramer of two alpha and two beta chains.

It carries out the reaction (1S,2R)-1-C-(indol-3-yl)glycerol 3-phosphate + L-serine = D-glyceraldehyde 3-phosphate + L-tryptophan + H2O. The protein operates within amino-acid biosynthesis; L-tryptophan biosynthesis; L-tryptophan from chorismate: step 5/5. The alpha subunit is responsible for the aldol cleavage of indoleglycerol phosphate to indole and glyceraldehyde 3-phosphate. The polypeptide is Tryptophan synthase alpha chain (Thermoanaerobacter sp. (strain X514)).